The chain runs to 247 residues: ATP synthase subunit a, chloroplastic (247 aa).

A run of 5 helical transmembrane segments spans residues 38–58 (QVLI…TLAV), 95–115 (VPFI…GALL), 134–154 (INTT…AGLS), 199–219 (LVVV…VMFL), and 220–240 (GLFT…AYIG).

This sequence belongs to the ATPase A chain family. F-type ATPases have 2 components, CF(1) - the catalytic core - and CF(0) - the membrane proton channel. CF(1) has five subunits: alpha(3), beta(3), gamma(1), delta(1), epsilon(1). CF(0) has four main subunits: a, b, b' and c.

It is found in the plastid. The protein resides in the chloroplast thylakoid membrane. Its function is as follows. Key component of the proton channel; it plays a direct role in the translocation of protons across the membrane. This Lemna minor (Common duckweed) protein is ATP synthase subunit a, chloroplastic.